Consider the following 190-residue polypeptide: HTH-type transcriptional repressor AcnR (190 aa).

The region spanning Ser10 to Met70 is the HTH tetR-type domain. The segment at residues Thr33–Phe52 is a DNA-binding region (H-T-H motif). Residues Leu79 to Val80, Arg130, and Asn134 each bind citrate. Glu181 contacts Mg(2+). Arg185 contacts citrate.

Homodimer.

AcnR negatively controls the expression of the aconitase gene acn. The sequence is that of HTH-type transcriptional repressor AcnR from Corynebacterium diphtheriae (strain ATCC 700971 / NCTC 13129 / Biotype gravis).